The following is a 293-amino-acid chain: Energy-coupling factor transporter ATP-binding protein EcfA2 (293 aa).

The 244-residue stretch at 3-246 (ITFQKVEHRY…ADELEKIGVD (244 aa)) folds into the ABC transporter domain. 40–47 (GHTGSGKS) provides a ligand contact to ATP.

This sequence belongs to the ABC transporter superfamily. Energy-coupling factor EcfA family. As to quaternary structure, forms a stable energy-coupling factor (ECF) transporter complex composed of 2 membrane-embedded substrate-binding proteins (S component), 2 ATP-binding proteins (A component) and 2 transmembrane proteins (T component).

The protein localises to the cell membrane. Its function is as follows. ATP-binding (A) component of a common energy-coupling factor (ECF) ABC-transporter complex. Unlike classic ABC transporters this ECF transporter provides the energy necessary to transport a number of different substrates. This chain is Energy-coupling factor transporter ATP-binding protein EcfA2, found in Bacillus cereus (strain ZK / E33L).